The primary structure comprises 81 residues: Three-finger toxin MALT0051C (81 aa).

The N-terminal stretch at 1–21 (MKTLLLTLVVVTVVCLDFGHT) is a signal peptide. Intrachain disulfides connect Cys24/Cys43, Cys38/Cys60, Cys62/Cys73, and Cys74/Cys79.

It belongs to the three-finger toxin family. Short-chain subfamily. Type I alpha-neurotoxin sub-subfamily. Expressed by the venom gland.

It is found in the secreted. Functionally, binds to muscle nicotinic acetylcholine receptor (nAChR) and inhibit acetylcholine from binding to the receptor, thereby impairing neuromuscular transmission. The chain is Three-finger toxin MALT0051C from Micrurus altirostris (Uruguayan coral snake).